Consider the following 267-residue polypeptide: CD82 antigen (267 aa).

Over Met-1–Tyr-11 the chain is Cytoplasmic. The S-palmitoyl cysteine moiety is linked to residue Cys-5. The helical transmembrane segment at Phe-12–Val-32 threads the bilayer. Residues Trp-33–Arg-53 are Extracellular-facing. A helical membrane pass occupies residues Met-54–Leu-72. The Cytoplasmic portion of the chain corresponds to Gly-73 to Cys-83. Cys-74 carries S-palmitoyl cysteine lipidation. A helical membrane pass occupies residues Leu-84–Met-110. Residues Gly-111 to Leu-228 lie on the Extracellular side of the membrane. N-linked (GlcNAc...) asparagine glycans are attached at residues Asn-129, Asn-157, and Asn-198. The helical transmembrane segment at Gly-229–Ile-250 threads the bilayer. Topologically, residues Cys-251–Tyr-267 are cytoplasmic.

This sequence belongs to the tetraspanin (TM4SF) family. In terms of assembly, forms homooligomers. Interacts directly with IGSF8. Interacts with EGFR. Interacts with VEGFA and PDGFB. Interacts with ITGA4. Interacts with ITGA6; this interaction reduces ITGA6 cell surface expression. Interacts with ITGB1. Interacts with TLR4; this interaction inhibits TLR4-mediated signaling pathway. Interacts with TLR9. Interacts with PLAUR. Palmitoylated. Palmitoylation contributes to oligomerization and surface expression. As to expression, lymphoid specific.

The protein resides in the cell membrane. It localises to the cytoplasmic vesicle. Its subcellular location is the phagosome. Its function is as follows. Structural component of specialized membrane microdomains known as tetraspanin-enriched microdomains (TERMs), which act as platforms for receptor clustering and signaling. Participates thereby in diverse biological functions such as cell signal transduction, adhesion, migration and protein trafficking. Acts as a attenuator of EGF signaling, facilitating ligand-induced endocytosis of the receptor and its subsequent desensitization. Mechanistically, modulates ligand-induced ubiquitination and trafficking of EGFR via E3 ligase CBL phosphorylation by PKC. Increases cell-matrix adhesion by regulating the membrane organization of integrin alpha4/ITA4. Modulates adhesion and suppresses cell migration through other integrins such as the alpha6/ITGA6 and beta1/ITGB1. Decreases cell-associated plasminogen activation by interfering with the interaction between urokinase-type plasminogen activator/PLAU and its receptor PLAUR. Associates with CD4 or CD8 and delivers costimulatory signals for the TCR/CD3 pathway. Plays a role in TLR9 trafficking to acidified CpG-containing compartments by controlling interaction between TLR9 and VAMP3 and subsequent myddosome assembly. Inhibits LPS-induced inflammatory response by preventing binding of LPS to TLR4 on the cell surface. Plays a role in the activation of macrophages into anti-inflammatory phenotypes. Independently of Toll-like receptor (TLR) signaling, is recruited to pathogen-containing phagosomes prior to fusion with lysosomes and thereby participates in antigen presentation. Also acts to control angiogenesis and switch angiogenic milieu to quiescent state by binding and sequestering VEGFA and PDGFB to inhibit the signaling they trigger via their respective cell surface receptor. In Homo sapiens (Human), this protein is CD82 antigen (CD82).